A 557-amino-acid chain; its full sequence is Glucose-6-phosphate isomerase (557 aa).

Ala-2 carries the N-acetylalanine modification. An N6-acetyllysine modification is found at Lys-12. Position 107 is a phosphoserine (Ser-107). Lys-142 bears the N6-acetyllysine mark. 159–160 is a binding site for D-glucose 6-phosphate; that stretch reads GS. Ser-185 bears the Phosphoserine; by CK2 mark. 210–215 serves as a coordination point for D-glucose 6-phosphate; that stretch reads SKTFTT. Residue Thr-250 is modified to Phosphothreonine. Residues Gln-354, Glu-358, and His-389 each coordinate D-glucose 6-phosphate. The active-site Proton donor is the Glu-358. Residue His-389 is part of the active site. Ser-455 is subject to Phosphoserine. Lys-519 serves as a coordination point for D-glucose 6-phosphate. The active site involves Lys-519.

The protein belongs to the GPI family. As to quaternary structure, homodimer; in the catalytically active form. Monomer in the secreted form. Post-translationally, phosphorylation at Ser-185 by CK2 has been shown to decrease enzymatic activity and may contribute to secretion by a non-classical secretory pathway. In terms of processing, ISGylated.

The protein resides in the cytoplasm. The protein localises to the secreted. It catalyses the reaction alpha-D-glucose 6-phosphate = beta-D-fructose 6-phosphate. It participates in carbohydrate degradation; glycolysis; D-glyceraldehyde 3-phosphate and glycerone phosphate from D-glucose: step 2/4. In terms of biological role, in the cytoplasm, catalyzes the conversion of glucose-6-phosphate to fructose-6-phosphate, the second step in glycolysis, and the reverse reaction during gluconeogenesis. Besides it's role as a glycolytic enzyme, also acts as a secreted cytokine: acts as an angiogenic factor (AMF) that stimulates endothelial cell motility. Acts as a neurotrophic factor, neuroleukin, for spinal and sensory neurons. It is secreted by lectin-stimulated T-cells and induces immunoglobulin secretion. The chain is Glucose-6-phosphate isomerase from Bos taurus (Bovine).